Here is a 409-residue protein sequence, read N- to C-terminus: Elongation factor Tu (409 aa).

One can recognise a tr-type G domain in the interval 10 to 214 (KPHVNIGTIG…EVDAYIPEPE (205 aa)). The interval 19–26 (GHVDHGKT) is G1. 19–26 (GHVDHGKT) is a binding site for GTP. T26 serves as a coordination point for Mg(2+). The interval 60–64 (GITIN) is G2. The interval 81-84 (DCPG) is G3. Residues 81–85 (DCPGH) and 136–139 (NKQD) each bind GTP. Residues 136–139 (NKQD) are G4. The interval 174–176 (SAL) is G5.

This sequence belongs to the TRAFAC class translation factor GTPase superfamily. Classic translation factor GTPase family. EF-Tu/EF-1A subfamily. Monomer.

The protein localises to the cytoplasm. The enzyme catalyses GTP + H2O = GDP + phosphate + H(+). Its function is as follows. GTP hydrolase that promotes the GTP-dependent binding of aminoacyl-tRNA to the A-site of ribosomes during protein biosynthesis. The sequence is that of Elongation factor Tu from Rippkaea orientalis (strain PCC 8801 / RF-1) (Cyanothece sp. (strain PCC 8801)).